The sequence spans 249 residues: Small ribosomal subunit protein uS2 (249 aa).

It belongs to the universal ribosomal protein uS2 family.

The sequence is that of Small ribosomal subunit protein uS2 from Acinetobacter baylyi (strain ATCC 33305 / BD413 / ADP1).